The sequence spans 666 residues: Adenylylsulfate reductase subunit alpha (666 aa).

FAD is bound by residues 32–35 (GGMG), 60–61 (DK), 67–69 (SGA), asparagine 78, isoleucine 193, serine 259, serine 417, 461–462 (AD), and serine 472.

It belongs to the FAD-dependent oxidoreductase 2 family. Heterodimer composed of AprA and AprB. The heterodimers can dimerize to form heterotetramers. The cofactor is FAD.

The protein resides in the cytoplasm. The catalysed reaction is sulfite + A + AMP + 2 H(+) = adenosine 5'-phosphosulfate + AH2. Its function is as follows. Catalytic subunit of the adenylylsulfate reductase which catalyzes reversibly the reduction of adenosine 5'-phosphosulfate (APS) to sulfite and AMP during dissimilatory sulfate reduction. This Megalodesulfovibrio gigas (strain ATCC 19364 / DSM 1382 / NCIMB 9332 / VKM B-1759) (Desulfovibrio gigas) protein is Adenylylsulfate reductase subunit alpha.